Consider the following 29-residue polypeptide: MDTVSIAWAALMVIFTFSISLVVWGRNGL.

A helical membrane pass occupies residues 3-23; it reads TVSIAWAALMVIFTFSISLVV.

The protein belongs to the PetN family. As to quaternary structure, the 4 large subunits of the cytochrome b6-f complex are cytochrome b6, subunit IV (17 kDa polypeptide, PetD), cytochrome f and the Rieske protein, while the 4 small subunits are PetG, PetL, PetM and PetN. The complex functions as a dimer.

It is found in the plastid. Its subcellular location is the chloroplast thylakoid membrane. Functionally, component of the cytochrome b6-f complex, which mediates electron transfer between photosystem II (PSII) and photosystem I (PSI), cyclic electron flow around PSI, and state transitions. The chain is Cytochrome b6-f complex subunit 8 from Psilotum nudum (Whisk fern).